A 303-amino-acid polypeptide reads, in one-letter code: N-acetyl-D-glucosamine kinase (303 aa).

ATP-binding positions include 4–11 (GFDIGGTK) and 133–140 (GVGGGLVF). Residues H157, C177, C179, and C184 each contribute to the Zn(2+) site.

Belongs to the ROK (NagC/XylR) family. NagK subfamily.

The catalysed reaction is N-acetyl-D-glucosamine + ATP = N-acetyl-D-glucosamine 6-phosphate + ADP + H(+). It participates in cell wall biogenesis; peptidoglycan recycling. Functionally, catalyzes the phosphorylation of N-acetyl-D-glucosamine (GlcNAc) derived from cell-wall degradation, yielding GlcNAc-6-P. The sequence is that of N-acetyl-D-glucosamine kinase from Shigella flexneri serotype 5b (strain 8401).